We begin with the raw amino-acid sequence, 157 residues long: UPF0262 protein RHE_CH00582 (157 aa).

The protein belongs to the UPF0262 family.

This is UPF0262 protein RHE_CH00582 from Rhizobium etli (strain ATCC 51251 / DSM 11541 / JCM 21823 / NBRC 15573 / CFN 42).